The sequence spans 147 residues: uncharacterized protein (147 aa).

This is an uncharacterized protein from Mycolicibacterium smegmatis (Mycobacterium smegmatis).